Reading from the N-terminus, the 85-residue chain is Cell division topological specificity factor (85 aa).

Belongs to the MinE family.

In terms of biological role, prevents the cell division inhibition by proteins MinC and MinD at internal division sites while permitting inhibition at polar sites. This ensures cell division at the proper site by restricting the formation of a division septum at the midpoint of the long axis of the cell. This is Cell division topological specificity factor from Deinococcus geothermalis (strain DSM 11300 / CIP 105573 / AG-3a).